Here is a 708-residue protein sequence, read N- to C-terminus: tRNA(Met) cytidine acetyltransferase TmcA (708 aa).

ATP-binding positions include Gln189, 215-224 (GRGKTSALGL), and Arg357. An N-acetyltransferase domain is found at 398–574 (PECVEQPERL…YSLLMVRGEH (177 aa)). Acetyl-CoA is bound by residues 502–504 (IAV) and 509–515 (QRQGIGS).

The protein belongs to the RNA cytidine acetyltransferase family. TmcA subfamily.

It localises to the cytoplasm. The catalysed reaction is cytidine(34) in elongator tRNA(Met) + acetyl-CoA + ATP + H2O = N(4)-acetylcytidine(34) in elongator tRNA(Met) + ADP + phosphate + CoA + H(+). Its function is as follows. Catalyzes the formation of N(4)-acetylcytidine (ac(4)C) at the wobble position of tRNA(Met), by using acetyl-CoA as an acetyl donor and ATP (or GTP). The polypeptide is tRNA(Met) cytidine acetyltransferase TmcA (Vibrio cholerae serotype O1 (strain ATCC 39315 / El Tor Inaba N16961)).